Consider the following 219-residue polypeptide: Putative protease Do-like 6, chloroplastic (219 aa).

Residues 1–45 (MLFRSVHHIVARFSNSTSTPIHRFFYSPSLLRRRSSFNASLISRC) constitute a chloroplast transit peptide. Positions 61–216 (KIFSFSREPN…YSGQINKKIY (156 aa)) are serine protease. Residues histidine 99, aspartate 130, and serine 208 each act as charge relay system in the active site.

This sequence belongs to the peptidase S1B family.

The protein resides in the plastid. It is found in the chloroplast. Its function is as follows. Putative serine protease. In Arabidopsis thaliana (Mouse-ear cress), this protein is Putative protease Do-like 6, chloroplastic (DEGP6).